A 59-amino-acid chain; its full sequence is UPF0434 protein GOX0764 (59 aa).

Belongs to the UPF0434 family.

The protein is UPF0434 protein GOX0764 of Gluconobacter oxydans (strain 621H) (Gluconobacter suboxydans).